A 139-amino-acid polypeptide reads, in one-letter code: NADPH-dependent 7-cyano-7-deazaguanine reductase (139 aa).

Cys-34 functions as the Thioimide intermediate in the catalytic mechanism. Asp-41 (proton donor) is an active-site residue. Substrate contacts are provided by residues 56–58 (VEL) and 75–76 (HE).

The protein belongs to the GTP cyclohydrolase I family. QueF type 1 subfamily.

It localises to the cytoplasm. The catalysed reaction is 7-aminomethyl-7-carbaguanine + 2 NADP(+) = 7-cyano-7-deazaguanine + 2 NADPH + 3 H(+). It participates in tRNA modification; tRNA-queuosine biosynthesis. Catalyzes the NADPH-dependent reduction of 7-cyano-7-deazaguanine (preQ0) to 7-aminomethyl-7-deazaguanine (preQ1). In Nitrosospira multiformis (strain ATCC 25196 / NCIMB 11849 / C 71), this protein is NADPH-dependent 7-cyano-7-deazaguanine reductase.